A 562-amino-acid chain; its full sequence is Sulfite reductase [NADPH] hemoprotein beta-component (562 aa).

Positions 428, 434, 473, and 477 each coordinate [4Fe-4S] cluster. Residue Cys477 coordinates siroheme.

This sequence belongs to the nitrite and sulfite reductase 4Fe-4S domain family. As to quaternary structure, alpha(8)-beta(8). The alpha component is a flavoprotein, the beta component is a hemoprotein. It depends on siroheme as a cofactor. Requires [4Fe-4S] cluster as cofactor.

It carries out the reaction hydrogen sulfide + 3 NADP(+) + 3 H2O = sulfite + 3 NADPH + 4 H(+). It functions in the pathway sulfur metabolism; hydrogen sulfide biosynthesis; hydrogen sulfide from sulfite (NADPH route): step 1/1. Its function is as follows. Component of the sulfite reductase complex that catalyzes the 6-electron reduction of sulfite to sulfide. This is one of several activities required for the biosynthesis of L-cysteine from sulfate. The protein is Sulfite reductase [NADPH] hemoprotein beta-component of Myxococcus xanthus (strain DK1622).